Reading from the N-terminus, the 116-residue chain is Vesicle-associated membrane protein 5 (116 aa).

Over 1 to 72 the chain is Cytoplasmic; sequence MAGKELERCQ…RWENARCRIY (72 aa). One can recognise a v-SNARE coiled-coil homology domain in the interval 5 to 65; it reads ELERCQRQAD…KTLAQKKRWE (61 aa). Phosphoserine is present on residues serine 41, serine 48, and serine 49. Residues 73–93 traverse the membrane as a helical; Anchor for type IV membrane protein segment; sequence MGLAVGIALLILLIVLLVIFL. Residues 94–116 are Vesicular-facing; sequence PQSSKGSSAPQVQDAGPASGPGE. The disordered stretch occupies residues 97–116; sequence SKGSSAPQVQDAGPASGPGE.

The protein belongs to the synaptobrevin family.

The protein resides in the cell membrane. It is found in the endomembrane system. It localises to the golgi apparatus. The protein localises to the trans-Golgi network membrane. In terms of biological role, may participate in trafficking events that are associated with myogenesis, such as myoblast fusion and/or GLUT4 trafficking. The polypeptide is Vesicle-associated membrane protein 5 (VAMP5) (Bos taurus (Bovine)).